A 227-amino-acid polypeptide reads, in one-letter code: Phosphoribosylformylglycinamidine synthase subunit PurQ (227 aa).

One can recognise a Glutamine amidotransferase type-1 domain in the interval 3–225 (FAVIVFPGSN…LKQWRETYVV (223 aa)). Cys86 acts as the Nucleophile in catalysis. Residues His194 and Glu196 contribute to the active site.

Part of the FGAM synthase complex composed of 1 PurL, 1 PurQ and 2 PurS subunits.

Its subcellular location is the cytoplasm. The catalysed reaction is N(2)-formyl-N(1)-(5-phospho-beta-D-ribosyl)glycinamide + L-glutamine + ATP + H2O = 2-formamido-N(1)-(5-O-phospho-beta-D-ribosyl)acetamidine + L-glutamate + ADP + phosphate + H(+). The enzyme catalyses L-glutamine + H2O = L-glutamate + NH4(+). It participates in purine metabolism; IMP biosynthesis via de novo pathway; 5-amino-1-(5-phospho-D-ribosyl)imidazole from N(2)-formyl-N(1)-(5-phospho-D-ribosyl)glycinamide: step 1/2. Its function is as follows. Part of the phosphoribosylformylglycinamidine synthase complex involved in the purines biosynthetic pathway. Catalyzes the ATP-dependent conversion of formylglycinamide ribonucleotide (FGAR) and glutamine to yield formylglycinamidine ribonucleotide (FGAM) and glutamate. The FGAM synthase complex is composed of three subunits. PurQ produces an ammonia molecule by converting glutamine to glutamate. PurL transfers the ammonia molecule to FGAR to form FGAM in an ATP-dependent manner. PurS interacts with PurQ and PurL and is thought to assist in the transfer of the ammonia molecule from PurQ to PurL. The sequence is that of Phosphoribosylformylglycinamidine synthase subunit PurQ from Bacillus cereus (strain 03BB102).